The primary structure comprises 446 residues: Glucose transporter GlcP (446 aa).

Over 1 to 6 (MKANKY) the chain is Cytoplasmic. Residues 7-31 (LIFILGALGGLLYGYDNGVISGALL) form a helical membrane-spanning segment. Residues 32 to 38 (FIHKDIP) are Extracellular-facing. The chain crosses the membrane as a helical span at residues 39–64 (LNSTTEGIVVSSMLIGAIVGAGSSGP). At 65–70 (LADKLG) the chain is on the cytoplasmic side. The helical transmembrane segment at 71 to 90 (RRRLVMLIAIVFIIGALILA) threads the bilayer. Residues 91–94 (ASTN) are Extracellular-facing. A helical transmembrane segment spans residues 95–122 (LALLIIGRLIIGLAVGGSMSTVPVYLSE). At 123 to 129 (MAPTEYR) the chain is on the cytoplasmic side. A helical transmembrane segment spans residues 130 to 152 (GSLGSLNQLMITIGILAAYLVNY). The Extracellular segment spans residues 153–154 (AF). A helical membrane pass occupies residues 155 to 180 (ADIEGWRWMLGLAVVPSVILLVGIYF). Topologically, residues 181-234 (MPESPRWLLENRNEEAARQVMKITYDDSEIDKELKEMKEINAISESTWTVIKSP) are cytoplasmic. A helical membrane pass occupies residues 235-269 (WLGRILIVGCIFAIFQQFIGINAVIFYSSSIFAKA). Over 270–272 (GLG) the chain is Extracellular. Residues 273–295 (EAASILGSVGIGTINVLVTIVAI) traverse the membrane as a helical segment. Residues 296–303 (FVVDKIDR) are Cytoplasmic-facing. Residues 304-324 (KKLLVGGNIGMIASLLIMAIL) traverse the membrane as a helical segment. Topologically, residues 325–329 (IWTIG) are extracellular. Residues 330–363 (IASSAWIIIVCLSLFIVFFGISWGPVLWVMLPEL) form a helical membrane-spanning segment. Residues 364–370 (FPMRARG) are Cytoplasmic-facing. Residues 371–399 (AATGISALVLNIGTLIVSLFFPILSDALS) form a helical membrane-spanning segment. Residues 400 to 401 (TE) are Extracellular-facing. The helical transmembrane segment at 402 to 420 (WVFLIFAFIGVLAMIFVIK) threads the bilayer. Over 421-446 (FLPETRGRSLEEIEYELRERTGARTE) the chain is Cytoplasmic.

This sequence belongs to the major facilitator superfamily. Sugar transporter (TC 2.A.1.1) family.

It localises to the cell membrane. With respect to regulation, inhibited by carbonyl cyanide m-chlorophenylhydrazone (CCCP) and by the human glucose transport inhibitors cytochalasin B, phloretin, and forskolin. Functionally, transporter highly specific for glucose uptake. The protein is Glucose transporter GlcP of Staphylococcus epidermidis (strain ATCC 12228 / FDA PCI 1200).